A 72-amino-acid polypeptide reads, in one-letter code: Mitochondrial import protein 2 (72 aa).

The interval 1 to 22 (MAEVLDLEIDPISDGEDDTYSS) is disordered. Residues 1 to 34 (MAEVLDLEIDPISDGEDDTYSSELDDDLKDSIEQ) lie on the Cytoplasmic side of the membrane. The helical transmembrane segment at 35–52 (LERVLCLVVFPLLGKFLG) threads the bilayer. At 53-72 (RKFAFHAWARWLERRRLVSN) the chain is on the mitochondrial intermembrane side.

Belongs to the MIM2 family. As to quaternary structure, component of the mitochondrial outer import machinery (MIM) complex containing at least mim1 and mim2. Interacts with mim1. Interacts with mitophagy receptor atg43.

Its subcellular location is the mitochondrion outer membrane. Its function is as follows. Component of the mitochondrial outer import machinery (MIM) complex that mediates transport of proteins into mitochondrial compartments. Promotes the insertion of tom70 into the outer mitochondrial membrane. Promotes the insertion of atg43 into the outer mitochondrial membrane. Involved in import of the subset of proteins with multiple alpha-helical transmembrane segments. The chain is Mitochondrial import protein 2 from Schizosaccharomyces pombe (strain 972 / ATCC 24843) (Fission yeast).